Consider the following 175-residue polypeptide: Endoribonuclease YbeY (175 aa).

Zn(2+)-binding residues include H137, H141, and H147.

It belongs to the endoribonuclease YbeY family. The cofactor is Zn(2+).

It localises to the cytoplasm. Its function is as follows. Single strand-specific metallo-endoribonuclease involved in late-stage 70S ribosome quality control and in maturation of the 3' terminus of the 16S rRNA. The protein is Endoribonuclease YbeY of Burkholderia ambifaria (strain ATCC BAA-244 / DSM 16087 / CCUG 44356 / LMG 19182 / AMMD) (Burkholderia cepacia (strain AMMD)).